The primary structure comprises 334 residues: DNA-directed RNA polymerase subunit alpha (334 aa).

The alpha N-terminal domain (alpha-NTD) stretch occupies residues 1–231 (MNMIKIEPYI…KQMSIFGVDL (231 aa)). The alpha C-terminal domain (alpha-CTD) stretch occupies residues 247–334 (ELKTLMIKID…NRKLAKLKSN (88 aa)).

It belongs to the RNA polymerase alpha chain family. In terms of assembly, homodimer. The RNAP catalytic core consists of 2 alpha, 1 beta/beta' and 1 omega subunit. When a sigma factor is associated with the core the holoenzyme is formed, which can initiate transcription.

The enzyme catalyses RNA(n) + a ribonucleoside 5'-triphosphate = RNA(n+1) + diphosphate. Functionally, DNA-dependent RNA polymerase catalyzes the transcription of DNA into RNA using the four ribonucleoside triphosphates as substrates. The sequence is that of DNA-directed RNA polymerase subunit alpha from Helicobacter hepaticus (strain ATCC 51449 / 3B1).